We begin with the raw amino-acid sequence, 186 residues long: Large ribosomal subunit protein uL5 (186 aa).

Belongs to the universal ribosomal protein uL5 family. Part of the 50S ribosomal subunit; part of the 5S rRNA/L5/L18/L25 subcomplex. Contacts the 5S rRNA and the P site tRNA. Forms a bridge to the 30S subunit in the 70S ribosome.

Functionally, this is one of the proteins that bind and probably mediate the attachment of the 5S RNA into the large ribosomal subunit, where it forms part of the central protuberance. In the 70S ribosome it contacts protein S13 of the 30S subunit (bridge B1b), connecting the 2 subunits; this bridge is implicated in subunit movement. Contacts the P site tRNA; the 5S rRNA and some of its associated proteins might help stabilize positioning of ribosome-bound tRNAs. The sequence is that of Large ribosomal subunit protein uL5 from Legionella pneumophila subsp. pneumophila (strain Philadelphia 1 / ATCC 33152 / DSM 7513).